The chain runs to 102 residues: Small ribosomal subunit protein uS10 (102 aa).

Belongs to the universal ribosomal protein uS10 family. Part of the 30S ribosomal subunit.

Involved in the binding of tRNA to the ribosomes. The polypeptide is Small ribosomal subunit protein uS10 (Phenylobacterium zucineum (strain HLK1)).